The sequence spans 2157 residues: DExH-box ATP-dependent RNA helicase DExH14 (2157 aa).

The disordered stretch occupies residues 374 to 394 (KAASNTQSRMPTYGTQVTVQT). Over residues 375–394 (AASNTQSRMPTYGTQVTVQT) the composition is skewed to polar residues. In terms of domain architecture, Helicase ATP-binding 1 spans 517–699 (QTVYHTNENI…FLRVNTDTGL (183 aa)). Residue 530-537 (APTGAGKT) coordinates ATP. Positions 641–644 (DEVH) match the DEVH box motif. Residues 734-932 (CYKKVVDSIK…SLKDNLNAEV (199 aa)) enclose the Helicase C-terminal 1 domain. In terms of domain architecture, SEC63 1 spans 1008-1315 (CTELGRVASH…LHAETYFTIS (308 aa)). Residues 1365–1540 (HVLYHTDNNV…WLGVGEIGLF (176 aa)) enclose the Helicase ATP-binding 2 domain. 1378-1385 (APTGSGKT) contacts ATP. Positions 1482 to 1485 (DEIH) match the DEIH box motif. A Helicase C-terminal 2 domain is found at 1571 to 1780 (NKPAYAAICT…GTIGNKEDAV (210 aa)). One can recognise an SEC63 2 domain in the interval 1839–2150 (PTMLGTIASQ…YLGFEQEHSI (312 aa)).

It belongs to the DExH box helicase family.

The protein localises to the nucleus. It carries out the reaction ATP + H2O = ADP + phosphate + H(+). RNA helicase that plays an essential role in pre-mRNA splicing as component of the U5 snRNP and U4/U6-U5 tri-snRNP complexes. Involved in spliceosome assembly, activation and disassembly. In Arabidopsis thaliana (Mouse-ear cress), this protein is DExH-box ATP-dependent RNA helicase DExH14.